We begin with the raw amino-acid sequence, 246 residues long: Adenosylcobinamide-GDP ribazoletransferase (246 aa).

The next 6 membrane-spanning stretches (helical) occupy residues 34 to 54 (IVTFPLVGLLLGAIAGAVALL), 59 to 79 (CGVPLAALFGVLALALLTGGF), 113 to 133 (GGLALIFVLVAKVLVIGELLL), 138 to 158 (PIAALAAACAVGRGMAVLLMY), 171 to 191 (LFIGKVSLQQTLVTMAMGVAL), and 194 to 214 (VLLGLQGLRAALITLVLIWGL).

This sequence belongs to the CobS family. The cofactor is Mg(2+).

Its subcellular location is the cell inner membrane. It catalyses the reaction alpha-ribazole + adenosylcob(III)inamide-GDP = adenosylcob(III)alamin + GMP + H(+). The catalysed reaction is alpha-ribazole 5'-phosphate + adenosylcob(III)inamide-GDP = adenosylcob(III)alamin 5'-phosphate + GMP + H(+). It functions in the pathway cofactor biosynthesis; adenosylcobalamin biosynthesis; adenosylcobalamin from cob(II)yrinate a,c-diamide: step 7/7. Functionally, joins adenosylcobinamide-GDP and alpha-ribazole to generate adenosylcobalamin (Ado-cobalamin). Also synthesizes adenosylcobalamin 5'-phosphate from adenosylcobinamide-GDP and alpha-ribazole 5'-phosphate. This Klebsiella pneumoniae (strain 342) protein is Adenosylcobinamide-GDP ribazoletransferase.